Here is a 142-residue protein sequence, read N- to C-terminus: MSWDSYVDNLIAQSKDASGTTHCDKACIIGKDGSAWTTMPTSDTSNNLKLTPEEMANIAKCFKSKDFAAFMSSGIYVNGTKYQFLREEDSKLVLGKKKGEGSLTLQSSKTAIVIGHCPEGGQQGNLNKAVGVIAEYLESLSM.

This sequence belongs to the profilin family. As to quaternary structure, occurs in many kinds of cells as a complex with monomeric actin in a 1:1 ratio. In terms of tissue distribution, expressed specifically in coelomocytes in response to injury.

It is found in the cytoplasm. The protein resides in the cytoskeleton. Its function is as follows. Binds to actin and affects the structure of the cytoskeleton. At high concentrations, profilin prevents the polymerization of actin, whereas it enhances it at low concentrations. By binding to PIP2, it inhibits the formation of IP3 and DG. This is Profilin from Strongylocentrotus purpuratus (Purple sea urchin).